Here is a 205-residue protein sequence, read N- to C-terminus: LexA repressor (205 aa).

Positions 28-48 form a DNA-binding region, H-T-H motif; sequence VREIGEAVGLASSSTVHGHLA. Active-site for autocatalytic cleavage activity residues include S127 and K165.

This sequence belongs to the peptidase S24 family. As to quaternary structure, homodimer. Post-translationally, following treatment with mitomycin C protein levels begin to decrease after a 5-min lag and do not return to their original levels for at least 90 minutes.

It catalyses the reaction Hydrolysis of Ala-|-Gly bond in repressor LexA.. Represses dinA, dinB, dinC, recA genes and itself by binding to the 14 bp palindromic sequence 5'-CGAACNNNNGTTCG-3'; some genes have a tandem consensus sequence and their binding is cooperative. In the presence of single-stranded DNA, RecA interacts with LexA causing an autocatalytic cleavage which disrupts the DNA-binding part of LexA, leading to derepression of the SOS regulon and eventually DNA repair; autocleavage is maximal at pH 11 in the absence of RecA and ssDNA. In Bacillus subtilis (strain 168), this protein is LexA repressor.